The sequence spans 560 residues: MKVWMAILISILCWQSSAWAVCPAWSPARAQEEISRLQQQIKQWDDDYWKEGKSEVEDGVYDQLSARLTQWQRCFGNETRDVMMPPLNGAVMHPVAHTGVRKMADKNALSLWMRERSDLWVQPKVDGVAVTLVYRDGKLNKAISRGNGLKGEDWTQKVRLISAVPQTVSGPLANSTLQGEIFLKRKGHIQQQMGGINARAKVAGLMMRQGNSDTLNSLAVFVWAWPDGPHLMTDRLKDLATAGFTLTQTYTRAVKNADEVAHVRNEWWKAKLPFVTDGVVVRAAKEPESRHWLPGQAEWLVAWKYQPVAQVAEVKAIQFAVGKSGKISVVASLAPVMLDDKKIQRVNIGSVRRWQEWDIAPGDQILVSLAGQGIPRIDDVVWRGAERTKPTPPENRFNSLTCYFASDVCQEQFISRLVWLGSKQVLGLDGIGEAGWRALHQTHRFEHIFSWLLLTPEQLQNTPGIAKSKSAQLWHQFNLARQQPFTRWVMAMGIPLTRAALNASDERSWSQLLFSTEQFWQQLPGTGSGRARQVIEWKENAQIKKLGSWLSAQQITGFEP.

Catalysis depends on Lys124, which acts as the N6-AMP-lysine intermediate.

This sequence belongs to the NAD-dependent DNA ligase family. LigB subfamily.

The catalysed reaction is NAD(+) + (deoxyribonucleotide)n-3'-hydroxyl + 5'-phospho-(deoxyribonucleotide)m = (deoxyribonucleotide)n+m + AMP + beta-nicotinamide D-nucleotide.. Functionally, catalyzes the formation of phosphodiester linkages between 5'-phosphoryl and 3'-hydroxyl groups in double-stranded DNA using NAD as a coenzyme and as the energy source for the reaction. The polypeptide is DNA ligase B (Escherichia coli O6:H1 (strain CFT073 / ATCC 700928 / UPEC)).